A 122-amino-acid chain; its full sequence is Large ribosomal subunit protein uL14 (122 aa).

This sequence belongs to the universal ribosomal protein uL14 family. In terms of assembly, part of the 50S ribosomal subunit. Forms a cluster with proteins L3 and L19. In the 70S ribosome, L14 and L19 interact and together make contacts with the 16S rRNA in bridges B5 and B8.

In terms of biological role, binds to 23S rRNA. Forms part of two intersubunit bridges in the 70S ribosome. This Methylococcus capsulatus (strain ATCC 33009 / NCIMB 11132 / Bath) protein is Large ribosomal subunit protein uL14.